Reading from the N-terminus, the 2219-residue chain is E3 ubiquitin-protein ligase Ubr3 (2219 aa).

Disordered stretches follow at residues 1 to 48 and 78 to 134; these read MDED…DLSS and AAGA…SALS. Basic and acidic residues predominate over residues 20–29; that stretch reads VREQTHHPPM. The segment covering 31–42 has biased composition (acidic residues); that stretch reads EDQELDNEDGSS. A compositionally biased stretch (low complexity) spans 114–134; the sequence is GPTTTTSSGTAAESGAASALS. The UBR-type zinc finger occupies 222-293; it reads AKCGLVWVPH…AEGFCSDHGI (72 aa). 2 disordered regions span residues 1348–1367 and 1440–1464; these read SFSL…TMDV and QREK…KARE. Acidic residues predominate over residues 1353 to 1367; the sequence is DGEDQSSDDDSTMDV. The RING-type; degenerate zinc finger occupies 1607–1643; that stretch reads CGHHVHLSCLEAYLKTLYTTQRQPVQDRGEFYCPVCR. Disordered stretches follow at residues 1872 to 1902 and 1935 to 1954; these read VGSD…QQQQ and SAAA…HGAS. Low complexity predominate over residues 1877 to 1888; it reads SAAESQQQESAA.

The protein belongs to the E3 ubiquitin-protein ligase UBR1-like family. In terms of assembly, selectively interacts (via UBR-type zinc finger) with the cleaved form of Diap1; this interaction is enhanced by tal. Interacts with tal and Rrp1. Interacts with ovo isoform B (via N-terminus). Interacts with Cad99C (via the cytoplasmic domain). Interacts with ck and Sans. Interacts with cos (via Kinesin motor domain). In vitro, self-ubiquitination in the presence of E1, E2 and ubiquitin.

Its subcellular location is the cytoplasm. The protein resides in the nucleus. It catalyses the reaction S-ubiquitinyl-[E2 ubiquitin-conjugating enzyme]-L-cysteine + [acceptor protein]-L-lysine = [E2 ubiquitin-conjugating enzyme]-L-cysteine + N(6)-ubiquitinyl-[acceptor protein]-L-lysine.. Its pathway is protein modification; protein ubiquitination. E3 ubiquitin-protein ligase which is a component of the N-end rule pathway. Recognizes and binds to proteins bearing specific N-terminal residues, leading to their ubiquitination and subsequent degradation. Binds to the E3 ubiquitin-protein ligase Diap1 and enhances its ubiquitination and anti-apoptotic functions. Essential during trichome development for the ubiquitination of the N-terminus of ovo isoform B (svb), converting it from a transcriptional inhibitor to an activator. Positively regulates a hh-signaling pathway which functions in photoreceptor differentiation. Activation of hh up-regulates transcription of Ubr3, which in turn promotes hh signaling by mediating the ubiquitination and degradation of cos. Necessary for auditory transduction: plays a role in Johnston's organ organization by acting in the regulation of zip and ck function in scolopidial apical attachment. Likely to function by acting in a pathway that negatively regulates the ubiquitination of zip, consequently affecting its interaction with ck. May also negatively regulate a component of the SCF (SKP1-CUL1-F-box protein) E3 ubiquitin-protein ligase complex Cul1, which also appears to function in the negative regulation of the zip-ck interaction and scolopidial apical attachment. The polypeptide is E3 ubiquitin-protein ligase Ubr3 (Drosophila melanogaster (Fruit fly)).